The sequence spans 30 residues: Varv peptide B (30 aa).

The segment at residues 1 to 30 (GLPVCGETCFGGTCNTPGCSCDPWPMCSRN) is a cross-link (cyclopeptide (Gly-Asn)). 3 disulfides stabilise this stretch: cysteine 5-cysteine 19, cysteine 9-cysteine 21, and cysteine 14-cysteine 27.

This is a cyclic peptide.

In terms of biological role, probably participates in a plant defense mechanism. The protein is Varv peptide B of Viola arvensis (European field pansy).